The primary structure comprises 416 residues: Tyrosine aminotransferase (416 aa).

N6-(pyridoxal phosphate)lysine is present on Lys-253.

It belongs to the class-I pyridoxal-phosphate-dependent aminotransferase family. As to quaternary structure, homodimer. The cofactor is pyridoxal 5'-phosphate. Post-translationally, the N-terminus is blocked.

The protein resides in the cytoplasm. It is found in the mitochondrion. It catalyses the reaction L-tyrosine + 2-oxoglutarate = 3-(4-hydroxyphenyl)pyruvate + L-glutamate. Its pathway is amino-acid degradation; L-phenylalanine degradation; acetoacetate and fumarate from L-phenylalanine: step 2/6. Its function is as follows. Transaminase involved in tyrosine breakdown. Converts tyrosine to p-hydroxyphenylpyruvate. This Trypanosoma cruzi protein is Tyrosine aminotransferase.